The primary structure comprises 611 residues: Glutathione hydrolase proenzyme 2 (611 aa).

The Cytoplasmic segment spans residues methionine 1–arginine 42. Residues phenylalanine 43–serine 63 form a helical; Signal-anchor for type II membrane protein membrane-spanning segment. Residues serine 64–tyrosine 611 are Lumenal-facing. N-linked (GlcNAc...) asparagine glycosylation occurs at asparagine 138. Arginine 147 lines the L-glutamate pocket. N-linked (GlcNAc...) asparagine glycans are attached at residues asparagine 153, asparagine 297, and asparagine 396. Threonine 420 functions as the Nucleophile in the catalytic mechanism. L-glutamate is bound by residues threonine 438, asparagine 440, glutamine 459, aspartate 462, serine 490 to serine 491, and glycine 512 to glycine 513.

It belongs to the gamma-glutamyltransferase family. Heterodimer composed of the light and heavy chains. The active site is located in the light chain. Post-translationally, cleaved by autocatalysis into a large and a small subunit.

The protein localises to the vacuole membrane. The enzyme catalyses an N-terminal (5-L-glutamyl)-[peptide] + an alpha-amino acid = 5-L-glutamyl amino acid + an N-terminal L-alpha-aminoacyl-[peptide]. It catalyses the reaction glutathione + H2O = L-cysteinylglycine + L-glutamate. The catalysed reaction is an S-substituted glutathione + H2O = an S-substituted L-cysteinylglycine + L-glutamate. It participates in sulfur metabolism; glutathione metabolism. Its function is as follows. Catalyzes the transfer of the gamma-glutamyl moiety of glutathione (GSH) and other gamma-glutamyl compounds to amino acids and peptides. Major GSH-degrading enzyme, catalyzing the hydrolytic release of L-glutamate from GSH. Plays a role in the turnover of the vacuolar GSH, serving as an alternative nitrogen source during nitrogen starvation. In Schizosaccharomyces pombe (strain 972 / ATCC 24843) (Fission yeast), this protein is Glutathione hydrolase proenzyme 2 (ggt2).